Here is a 200-residue protein sequence, read N- to C-terminus: ATP-dependent Clp protease proteolytic subunit (200 aa).

Ser102 serves as the catalytic Nucleophile. Residue His127 is part of the active site.

This sequence belongs to the peptidase S14 family. In terms of assembly, fourteen ClpP subunits assemble into 2 heptameric rings which stack back to back to give a disk-like structure with a central cavity, resembling the structure of eukaryotic proteasomes.

The protein localises to the cytoplasm. The catalysed reaction is Hydrolysis of proteins to small peptides in the presence of ATP and magnesium. alpha-casein is the usual test substrate. In the absence of ATP, only oligopeptides shorter than five residues are hydrolyzed (such as succinyl-Leu-Tyr-|-NHMec, and Leu-Tyr-Leu-|-Tyr-Trp, in which cleavage of the -Tyr-|-Leu- and -Tyr-|-Trp bonds also occurs).. Cleaves peptides in various proteins in a process that requires ATP hydrolysis. Has a chymotrypsin-like activity. Plays a major role in the degradation of misfolded proteins. This Dehalococcoides mccartyi (strain ATCC BAA-2100 / JCM 16839 / KCTC 5957 / BAV1) protein is ATP-dependent Clp protease proteolytic subunit.